Reading from the N-terminus, the 442-residue chain is 5-methylthioadenosine/S-adenosylhomocysteine deaminase (442 aa).

2 residues coordinate Zn(2+): His72 and His74. Substrate contacts are provided by Glu101 and His194. His221 serves as a coordination point for Zn(2+). 2 residues coordinate substrate: Glu224 and Asp309. Asp309 serves as a coordination point for Zn(2+).

It belongs to the metallo-dependent hydrolases superfamily. MTA/SAH deaminase family. Requires Zn(2+) as cofactor.

It catalyses the reaction S-adenosyl-L-homocysteine + H2O + H(+) = S-inosyl-L-homocysteine + NH4(+). It carries out the reaction S-methyl-5'-thioadenosine + H2O + H(+) = S-methyl-5'-thioinosine + NH4(+). Functionally, catalyzes the deamination of 5-methylthioadenosine and S-adenosyl-L-homocysteine into 5-methylthioinosine and S-inosyl-L-homocysteine, respectively. Is also able to deaminate adenosine. The protein is 5-methylthioadenosine/S-adenosylhomocysteine deaminase of Teredinibacter turnerae (strain ATCC 39867 / T7901).